Here is a 1016-residue protein sequence, read N- to C-terminus: FHIP family protein Bm1_18400 (1016 aa).

Disordered stretches follow at residues 586–608 (DSLRQHTPPPELGEQESSSRSSF) and 757–778 (SDGFKSDTNNDNDDEDPAPLGK).

Belongs to the FHIP family.

The protein is FHIP family protein Bm1_18400 of Brugia malayi (Filarial nematode worm).